The chain runs to 197 residues: Protein shisa-4 (197 aa).

The first 27 residues, M1 to A27, serve as a signal peptide directing secretion. Residues G28–A87 are Extracellular-facing. The helical transmembrane segment at G88–L108 threads the bilayer. Residues C109 to A197 lie on the Cytoplasmic side of the membrane.

This sequence belongs to the shisa family.

Its subcellular location is the membrane. The protein is Protein shisa-4 (SHISA4) of Homo sapiens (Human).